Reading from the N-terminus, the 357-residue chain is Nitronate monooxygenase npaC (357 aa).

The FMN site is built by Q167, G172, and G206.

It belongs to the nitronate monooxygenase family. NMO class I subfamily. It depends on FMN as a cofactor.

Its function is as follows. Nitronate monooxygenase; part of the gene cluster that mediates the biosynthesis of the deadly neurotoxic nitroalkane 3-nitropropanoic acid (3-NPA) that acts as an antimetabolite of succinate and irreversibly inhibits succinate dehydrogenase and disrupts mitochondrial oxidative phosphorylation. Catalyzes the oxidation of 3-NPA to nitrite and malonic semialdehyde. NpaC is not conserved in all fungal npa clusters and, while it is possible that it serves as a self-protection mechanism against accumulation of 3-NPA (by npaA and npaB) in the producing host, the more likely scenario may be the three enzymes representing an alternative catabolic pathway of aspartate to generate readily metabolizable nitrogen and carbon sources. The protein is Nitronate monooxygenase npaC of Metarhizium robertsii (strain ARSEF 23 / ATCC MYA-3075) (Metarhizium anisopliae (strain ARSEF 23)).